The following is a 258-amino-acid chain: Phosphate import ATP-binding protein PstB (258 aa).

The ABC transporter domain occupies 5-253; the sequence is LDLNDVNIYY…PTKKETEDYI (249 aa). 37–44 provides a ligand contact to ATP; it reads GPSGCGKS.

Belongs to the ABC transporter superfamily. Phosphate importer (TC 3.A.1.7) family. In terms of assembly, the complex is composed of two ATP-binding proteins (PstB), two transmembrane proteins (PstC and PstA) and a solute-binding protein (PstS).

The protein resides in the cell membrane. The catalysed reaction is phosphate(out) + ATP + H2O = ADP + 2 phosphate(in) + H(+). Functionally, part of the ABC transporter complex PstSACB involved in phosphate import. Responsible for energy coupling to the transport system. The chain is Phosphate import ATP-binding protein PstB from Corynebacterium jeikeium (strain K411).